The following is a 168-amino-acid chain: HTH-type transcriptional regulator IscR (168 aa).

In terms of domain architecture, HTH rrf2-type spans 2–131; sequence KLTSKGRYAV…DGISLGELMV (130 aa). The segment at residues 28 to 51 is a DNA-binding region (H-T-H motif); that stretch reads LADISERQGISLSYLEQLFSKLRK. [2Fe-2S] cluster contacts are provided by Cys-92, Cys-98, and Cys-104.

Requires [2Fe-2S] cluster as cofactor.

Functionally, regulates the transcription of several operons and genes involved in the biogenesis of Fe-S clusters and Fe-S-containing proteins. This chain is HTH-type transcriptional regulator IscR, found in Aliivibrio salmonicida (strain LFI1238) (Vibrio salmonicida (strain LFI1238)).